The chain runs to 250 residues: Probable transcriptional regulatory protein Lferr_0060 (250 aa).

The protein belongs to the TACO1 family.

The protein resides in the cytoplasm. The chain is Probable transcriptional regulatory protein Lferr_0060 from Acidithiobacillus ferrooxidans (strain ATCC 53993 / BNL-5-31) (Leptospirillum ferrooxidans (ATCC 53993)).